The chain runs to 563 residues: MVSKSLFLAAAVNLAGVLAQAPRPSLNGNEVISGVLEGKVDTFKGIPFADPPLNDLRFKHPQPFTGSYQGLKANDFSPACMQLDPGNSLTLLDKALGLAKVIPEEFRGPLYDMAKGTVSMNEDCLYLNVFRPAGTKPDAKLPVMVWIYGGAFVYGSSAAYPGNSYVKESINMGQPVVFVSINYRTGPFGFLGGDAITAEGNTNAGLHDQRKGLEWVSDNIANFGGDPDKVMIFGESAGAMSVAHQLIAYGGDNTYNGKKLFHSAILQSGGPLPYHDSSSVGPDISYNRFAQYAGCDTSASANDTLECLRSKSSSVLHDAQNSYDLKDLFGLLPQFLGFGPRPDGNIIPDAAYELFRSGRYAKVPYISGNQEDEGTAFAPVALNATTTPHVKKWLQYIFYDASEASIDRVLSLYPQTLSVGSPFRTGILNALTPQFKRVAAILSDMLFQSPRRVMLSATKDVNRWTYLSTHLHNLVPFLGTFHGNELIFQFNVNIGPANSYLRYFISFANHHDPNVGTNLLQWDQYTDEGKEMLEIHMTDNVMRTDDYRIEGISNFETDVNLYG.

The first 19 residues, Met1–Ala19, serve as a signal peptide directing secretion. Gln20 carries the post-translational modification Pyrrolidone carboxylic acid. A disulfide bridge connects residues Cys80 and Cys124. Residue Ser236 is the Acyl-ester intermediate of the active site. A disulfide bond links Cys295 and Cys307. Asn302 is a glycosylation site (N-linked (GlcNAc...) asparagine). The active-site Charge relay system is the Glu373. An N-linked (GlcNAc...) asparagine glycan is attached at Asn383. His482 (charge relay system) is an active-site residue.

Belongs to the type-B carboxylesterase/lipase family. Monomer.

Its subcellular location is the secreted. It carries out the reaction a triacylglycerol + H2O = a diacylglycerol + a fatty acid + H(+). Its function is as follows. Hydrolyzes all ester bonds in triglyceride and displays a high affinity for triolein. For unsaturated substrates having long fatty acyl chains (C18:2 cis-9, cis-12 and C18:3 cis-9, cis-12, cis-15) GCL I shows higher specific activity than GCL II, whereas GCL II shows higher specific activity against saturated substrates having short fatty acid chains (C8, C10, C12 and C14). This chain is Lipase 2 (LIP2), found in Geotrichum candidum (Oospora lactis).